Consider the following 360-residue polypeptide: G-protein coupled receptor 15 (360 aa).

At 1–33 (MDPEETSVYLDYYYATSPNPDIRETHSHVPYTS) the chain is on the extracellular side. The chain crosses the membrane as a helical span at residues 34–54 (VFLPVFYTAVFLTGVLGNLVL). The Cytoplasmic portion of the chain corresponds to 55–69 (MGALHFKPGSRRLID). The helical transmembrane segment at 70-90 (IFIINLAASDFIFLVTLPLWV) threads the bilayer. Over 91–120 (DKEASLGLWRTGSFLCKGSSYMISVNMHCS) the chain is Extracellular. The helical transmembrane segment at 121–141 (VFLLTCMSVDRYLAIVCPVVS) threads the bilayer. The Cytoplasmic portion of the chain corresponds to 142-149 (RKFRRTDC). A helical transmembrane segment spans residues 150-170 (AYVVCASIWFISCLLGLPTLL). At 171 to 192 (SRELTLIDDKPYCAEKKATPLK) the chain is on the extracellular side. Residues 193-213 (LIWSLVALIFTFFVPLLSIVT) form a helical membrane-spanning segment. Topologically, residues 214-239 (CYCCIARKLCAHYQQSGKHNKKLKKS) are cytoplasmic. A helical transmembrane segment spans residues 240–260 (IKIIFIVVAAFLVSWLPFNTS). The Extracellular portion of the chain corresponds to 261-284 (KLLAIVSGLQQERYFPSAILQLGM). Residues 285–305 (EVSGPLAFANSCVNPFIYYIF) traverse the membrane as a helical segment. Topologically, residues 306–360 (DSYIRRAIVHCLCPCLKNYDFGSSTETSDSHLTKALSTFIHAEDFTRRRKRSVSL) are cytoplasmic. Serine 359 bears the Phosphoserine mark.

Belongs to the G-protein coupled receptor 1 family. As to quaternary structure, interacts with adapter YWHAE; this interaction promotes ER-to-Golgi transport of GPR15. Phosphorylation is necessary for YWHAE binding and efficient surface expression. Post-translationally, O-glycosylated. Sialylated O-glycans in the N-terminal tail inhibits binding of GPR15LG. In terms of processing, sulfation is required for efficient binding of GPR15LG.

It localises to the cell membrane. Functionally, g protein-coupled receptor that plays an important role in immune homeostasis. Acts via its natural ligand GPR15LG, a chemokine-like polypeptide strongly expressed in gastrointestinal tissues. GPR15-GPR15LG signaling axis regulates intestinal homeostasis and inflammation through the migration of immune cells. Controls thereby the specific homing of T-cells, particularly FOXP3+ regulatory T-cells (Tregs), to the large intestine lamina propria. Also required for skin localization of thymus-derived dendritic epidermal T-cells. Plays an important role in mediating cytoprotective function as well as angiogenesis of thrombomodulin. Mechanistically, preferentially signals through the Gi/o pathway to inhibit adenylate cyclase activity and activate a phosphatidylinositol-calcium second messenger system that regulates the release of Ca(2+) ions from intracellular stores. This chain is G-protein coupled receptor 15 (GPR15), found in Macaca nemestrina (Pig-tailed macaque).